Reading from the N-terminus, the 59-residue chain is Cuticle protein 7 isoform b (59 aa).

Position 1 is a pyrrolidone carboxylic acid (Q1).

This is Cuticle protein 7 isoform b from Limulus polyphemus (Atlantic horseshoe crab).